An 842-amino-acid polypeptide reads, in one-letter code: Protein translocase subunit SecA (842 aa).

Residues Gln85, 103-107, and Asp493 contribute to the ATP site; that span reads GEGKT. Cys825, Cys827, Cys836, and His837 together coordinate Zn(2+).

The protein belongs to the SecA family. In terms of assembly, monomer and homodimer. Part of the essential Sec protein translocation apparatus which comprises SecA, SecYEG and auxiliary proteins SecDF. Other proteins may also be involved. The cofactor is Zn(2+).

The protein resides in the cell membrane. It localises to the cytoplasm. It carries out the reaction ATP + H2O + cellular proteinSide 1 = ADP + phosphate + cellular proteinSide 2.. Part of the Sec protein translocase complex. Interacts with the SecYEG preprotein conducting channel. Has a central role in coupling the hydrolysis of ATP to the transfer of proteins into and across the cell membrane, serving as an ATP-driven molecular motor driving the stepwise translocation of polypeptide chains across the membrane. This Streptococcus uberis (strain ATCC BAA-854 / 0140J) protein is Protein translocase subunit SecA.